A 341-amino-acid polypeptide reads, in one-letter code: Protein RecA, plasmid (341 aa).

Position 80-87 (80-87) interacts with ATP; the sequence is GAESSGKT.

Belongs to the RecA family.

The protein localises to the cytoplasm. Functionally, can catalyze the hydrolysis of ATP in the presence of single-stranded DNA, the ATP-dependent uptake of single-stranded DNA by duplex DNA, and the ATP-dependent hybridization of homologous single-stranded DNAs. It interacts with LexA causing its activation and leading to its autocatalytic cleavage. The sequence is that of Protein RecA, plasmid from Lactococcus lactis subsp. lactis (Streptococcus lactis).